The following is a 324-amino-acid chain: MKKKWKPSASIKDLMKRSKIIADIRSFFLKKNIMEVETPILSQSGVTDVNLMPFITNYFSFNDNIKKKNLWLITSPEYHMKRLLSAGSGSIYQICRSFRNQEFGQYHNPEFTMLEWYQLSCSMEKMIEEIDFFFQKILNFNKADKISYQEVFMKFLKIDPLSTSLSELFQCYKKFNLKNLIYLENDLNQLIENIFTLQIQPFLGKEKPLFVYHFPSEQACLASINKKDSRVSERFEIFFKGIELGNGFHELTDYFEQRKRFIKDNRKRCDMNLPEQKIDDYFLDAIHHGLPTCSGVAIGLDRLIMIALNKNSIDQVMSFSFERS.

Position 75 to 77 (75 to 77) interacts with substrate; sequence SPE. ATP contacts are provided by residues 99–101 and N108; that span reads RNQ. Y117 lines the substrate pocket. Position 243 to 244 (243 to 244) interacts with ATP; the sequence is EL. Residue E250 participates in substrate binding. Residue G299 coordinates ATP.

This sequence belongs to the class-II aminoacyl-tRNA synthetase family. EpmA subfamily. In terms of assembly, homodimer.

It carries out the reaction D-beta-lysine + L-lysyl-[protein] + ATP = N(6)-((3R)-3,6-diaminohexanoyl)-L-lysyl-[protein] + AMP + diphosphate + H(+). Functionally, with EpmB is involved in the beta-lysylation step of the post-translational modification of translation elongation factor P (EF-P). Catalyzes the ATP-dependent activation of (R)-beta-lysine produced by EpmB, forming a lysyl-adenylate, from which the beta-lysyl moiety is then transferred to the epsilon-amino group of a conserved specific lysine residue in EF-P. The chain is Elongation factor P--(R)-beta-lysine ligase from Buchnera aphidicola subsp. Schizaphis graminum (strain Sg).